A 336-amino-acid polypeptide reads, in one-letter code: Sulfate/thiosulfate import ATP-binding protein CysA (336 aa).

The ABC transporter domain occupies 3-233 (ITIENVSKSF…PASPFVMSFI (231 aa)). 35–42 (GPSGSGKS) is a binding site for ATP.

It belongs to the ABC transporter superfamily. Sulfate/tungstate importer (TC 3.A.1.6) family. The complex is composed of two ATP-binding proteins (CysA), two transmembrane proteins (CysT and CysW) and a solute-binding protein (CysP).

Its subcellular location is the cell inner membrane. The enzyme catalyses sulfate(out) + ATP + H2O = sulfate(in) + ADP + phosphate + H(+). The catalysed reaction is thiosulfate(out) + ATP + H2O = thiosulfate(in) + ADP + phosphate + H(+). Part of the ABC transporter complex CysAWTP involved in sulfate/thiosulfate import. Responsible for energy coupling to the transport system. The protein is Sulfate/thiosulfate import ATP-binding protein CysA of Thermosynechococcus vestitus (strain NIES-2133 / IAM M-273 / BP-1).